The chain runs to 216 residues: MGWIRGRRSRHSWEMSEFHNYNLDLKKSDFSTRWQKQRCPVVKSKCRENASPFFFCCFIAVAMGIRFIIMVTIWSAVFLNSLFNQEVQIPLTESYCGPCPKNWICYKNNCYQFFNESKNWYESQASCMSQNASLLKVYSKEDQDLLKLVKSYHWMGLVHIPTNGSWQWEDGSILSPNLLTIIEMQKGDCALYASSFKGYIENCSTPNTYICMQRTV.

Topologically, residues 1–51 are cytoplasmic; the sequence is MGWIRGRRSRHSWEMSEFHNYNLDLKKSDFSTRWQKQRCPVVKSKCRENAS. A helical; Signal-anchor for type II membrane protein transmembrane segment spans residues 52 to 72; sequence PFFFCCFIAVAMGIRFIIMVT. Topologically, residues 73-216 are extracellular; it reads IWSAVFLNSL…NTYICMQRTV (144 aa). Cystine bridges form between cysteine 96/cysteine 105 and cysteine 99/cysteine 110. The C-type lectin domain maps to 98-213; that stretch reads PCPKNWICYK…STPNTYICMQ (116 aa). 4 N-linked (GlcNAc...) asparagine glycosylation sites follow: asparagine 115, asparagine 131, asparagine 163, and asparagine 202. 2 disulfides stabilise this stretch: cysteine 127/cysteine 211 and cysteine 189/cysteine 203.

In terms of assembly, homodimer; disulfide-linked. Heterohexamer composed of two subunits of KLRK1 and four subunits of HCST/DAP10. Interacts (via transmembrane domain) with HCST/DAP10 (via transmembrane domain); the interaction is required for KLRK1 NK cell surface and induces NK cell-mediated cytotoxicity. Can form disulfide-bonded heterodimer with CD94. Interacts with CEACAM1; recruits PTPN6 that dephosphorylates VAV1. Natural killer cells.

Its subcellular location is the cell membrane. Its function is as follows. Functions as an activating and costimulatory receptor involved in immunosurveillance upon binding to various cellular stress-inducible ligands displayed at the surface of autologous tumor cells and virus-infected cells. Provides both stimulatory and costimulatory innate immune responses on activated killer (NK) cells, leading to cytotoxic activity. Acts as a costimulatory receptor for T-cell receptor (TCR) in CD8(+) T-cell-mediated adaptive immune responses by amplifying T-cell activation. Stimulates perforin-mediated elimination of ligand-expressing tumor cells. Signaling involves calcium influx, culminating in the expression of TNF-alpha. Participates in NK cell-mediated bone marrow graft rejection. May play a regulatory role in differentiation and survival of NK cells. Binds to ligands belonging to various subfamilies of MHC class I-related glycoproteins. In Pan troglodytes (Chimpanzee), this protein is NKG2-D type II integral membrane protein (KLRK1).